Here is a 988-residue protein sequence, read N- to C-terminus: MPGGKRGLVAPQNTFLENIVRRSSESSFLLGNAQIVDWPVVYSNDGFCKLSGYHRADVMQKSSTCSFMYGELTDKKTIEKVRQTFDNYESNCFEVLLYKKNRTPVWFYMQIAPIRNEHEKVVLFLCTFKDITLFKQPIEDDSTKGWTKFARLTRALTNSRSVLQQLTPMNKTETVHKHSRLAEVLQLGSDILPQYKQEAPKTPPHIILHYCAFKTTWDWVILILTFYTAIMVPYNVSFKTKQNNIAWLVLDSVVDVIFLVDIVLNFHTTFVGPGGEVISDPKLIRMNYLKTWFVIDLLSCLPYDIINAFENVDEGISSLFSSLKVVRLLRLGRVARKLDHYLEYGAAVLVLLVCVFGLVAHWLACIWYSIGDYEVIDEVTNTIQIDSWLYQLALSIGTPYRYNTSAGIWEGGPSKDSLYVSSLYFTMTSLTTIGFGNIAPTTDVEKMFSVAMMMVGSLLYATIFGNVTTIFQQMYANTNRYHEMLNNVRDFLKLYQVPKGLSERVMDYIVSTWSMSKGIDTEKVLSICPKDMRADICVHLNRKVFNEHPAFRLASDGCLRALAVEFQTIHCAPGDLIYHAGESVDALCFVVSGSLEVIQDEEVVAILGKGDVFGDIFWKETTLAHACANVRALTYCDLHIIKREALLKVLDFYTAFANSFSRNLTLTCNLRKRIIFRKISDVKKEEEERLRQKNEVTLSIPVDHPVRKLFQKFKQQKELRIQGSAQSDPERSQLQVESRPLQNGASITGTSVVTVSQITPIQTSLAYVKTSESLKQNNRDAMELKPNGGAEPKCLKVNSPIRMKNGNGKGWLRLKNNMGAQEEKKEDWNNVTKAESMGLLSEDPKGSDSENSVTKNPLRKTDSCDSGITKSDLRLDKAGEARSPLEHSPSQADVKHSFYPIPEQALQTTLQEVKHELKEDIQLLSCRMTALEKQVAEILKLLSEKSVPQTSSPKPQIPLQVPPQIPCQDIFSVSRPESPESDKDEINF.

Topologically, residues 1–217 are cytoplasmic; it reads MPGGKRGLVA…LHYCAFKTTW (217 aa). Positions 14–86 constitute a PAS domain; sequence TFLENIVRRS…TIEKVRQTFD (73 aa). The PAC domain occupies 91–143; sequence NCFEVLLYKKNRTPVWFYMQIAPIRNEHEKVVLFLCTFKDITLFKQPIEDDST. The chain crosses the membrane as a helical span at residues 218–238; that stretch reads DWVILILTFYTAIMVPYNVSF. The Extracellular segment spans residues 239-243; that stretch reads KTKQN. The helical transmembrane segment at 244 to 264 threads the bilayer; it reads NIAWLVLDSVVDVIFLVDIVL. Residues 265–291 are Cytoplasmic-facing; that stretch reads NFHTTFVGPGGEVISDPKLIRMNYLKT. The helical transmembrane segment at 292 to 312 threads the bilayer; sequence WFVIDLLSCLPYDIINAFENV. The Extracellular portion of the chain corresponds to 313–319; the sequence is DEGISSL. A helical; Voltage-sensor membrane pass occupies residues 320-340; that stretch reads FSSLKVVRLLRLGRVARKLDH. The Cytoplasmic portion of the chain corresponds to 341-346; sequence YLEYGA. The chain crosses the membrane as a helical span at residues 347–367; sequence AVLVLLVCVFGLVAHWLACIW. Topologically, residues 368–419 are extracellular; that stretch reads YSIGDYEVIDEVTNTIQIDSWLYQLALSIGTPYRYNTSAGIWEGGPSKDSLY. Asn-403 carries N-linked (GlcNAc...) asparagine glycosylation. Residues 420-440 constitute an intramembrane region (pore-forming); it reads VSSLYFTMTSLTTIGFGNIAP. The Selectivity filter signature appears at 432 to 437; it reads TIGFGN. Topologically, residues 441–446 are extracellular; it reads TTDVEK. A helical membrane pass occupies residues 447–467; it reads MFSVAMMMVGSLLYATIFGNV. The Cytoplasmic portion of the chain corresponds to 468-988; sequence TTIFQQMYAN…PESDKDEINF (521 aa). 550–668 contacts a nucleoside 3',5'-cyclic phosphate; sequence AFRLASDGCL…SFSRNLTLTC (119 aa). A calmodulin-binding region spans residues 704–715; sequence HPVRKLFQKFKQ. The segment at 721 to 741 is disordered; it reads IQGSAQSDPERSQLQVESRPL. The segment covering 723 to 741 has biased composition (polar residues); it reads GSAQSDPERSQLQVESRPL. A Glycyl lysine isopeptide (Lys-Gly) (interchain with G-Cter in ubiquitin) cross-link involves residue Lys-785. The interval 838-893 is disordered; it reads GLLSEDPKGSDSENSVTKNPLRKTDSCDSGITKSDLRLDKAGEARSPLEHSPSQAD. Basic and acidic residues predominate over residues 871 to 885; the sequence is SDLRLDKAGEARSPL. Residue Ser-883 is modified to Phosphoserine. The segment at 909 to 948 is CAD (involved in subunit assembly); it reads TLQEVKHELKEDIQLLSCRMTALEKQVAEILKLLSEKSVP.

This sequence belongs to the potassium channel family. H (Eag) (TC 1.A.1.20) subfamily. Kv10.2/KCNH5 sub-subfamily. As to quaternary structure, homotetramer. The potassium channel is probably composed of a homo- or heterotetrameric complex of pore-forming alpha subunits that can associate with modulating beta subunits. Heteromultimer with KCNH1/EAG.

The protein resides in the membrane. The catalysed reaction is K(+)(in) = K(+)(out). In terms of biological role, pore-forming (alpha) subunit of a voltage-gated delayed rectifier potassium channel that mediates outward-rectifying potassium currents which, on depolarization, reaches a steady-state level and do not inactivate. The kinetic is characterized by a slow activation time course and a small voltage dependence of the activation time constants, therefore, starts to open at more negative voltages. The activation kinetics depend on the prepulse potential and external divalent cation concentration. The time course of activation is biphasic with a fast and a slowly activating current component. With negative prepulses, the current activation is delayed and slowed down several fold, whereas more positive prepulses speed up activation, therefore the activation rate depends on holding potential. The sequence is that of Voltage-gated delayed rectifier potassium channel KCNH5 from Mus musculus (Mouse).